The chain runs to 193 residues: V-type sodium ATPase subunit E (193 aa).

Belongs to the V-ATPase E subunit family. In terms of processing, the N-terminus is blocked.

In terms of biological role, involved in ATP-driven sodium extrusion. This Enterococcus hirae (strain ATCC 9790 / DSM 20160 / JCM 8729 / LMG 6399 / NBRC 3181 / NCIMB 6459 / NCDO 1258 / NCTC 12367 / WDCM 00089 / R) protein is V-type sodium ATPase subunit E (ntpE).